A 204-amino-acid polypeptide reads, in one-letter code: uncharacterized protein (204 aa).

The disordered stretch occupies residues 77–111; the sequence is APHGSRIPGRCRRSPRCSRRPGGSRLRGGTWTPRL. The segment covering 85–95 has biased composition (basic residues); sequence GRCRRSPRCSR. Over residues 96–105 the composition is skewed to low complexity; it reads RPGGSRLRGG.

This is an uncharacterized protein from Homo sapiens (Human).